A 119-amino-acid chain; its full sequence is Holo-[acyl-carrier-protein] synthase (119 aa).

The Mg(2+) site is built by aspartate 8 and glutamate 58.

It belongs to the P-Pant transferase superfamily. AcpS family. Requires Mg(2+) as cofactor.

Its subcellular location is the cytoplasm. The catalysed reaction is apo-[ACP] + CoA = holo-[ACP] + adenosine 3',5'-bisphosphate + H(+). In terms of biological role, transfers the 4'-phosphopantetheine moiety from coenzyme A to a Ser of acyl-carrier-protein. The chain is Holo-[acyl-carrier-protein] synthase from Oceanobacillus iheyensis (strain DSM 14371 / CIP 107618 / JCM 11309 / KCTC 3954 / HTE831).